Consider the following 540-residue polypeptide: Raucaffricine-O-beta-D-glucosidase (540 aa).

A beta-D-glucoside is bound by residues Gln-36, His-140, and 185-186 (NE). Glu-186 serves as the catalytic Proton donor. Cys-221 and Cys-230 are joined by a disulfide. A beta-D-glucoside contacts are provided by residues Tyr-347, Glu-420, Trp-469, 476-477 (EW), and Phe-485. Glu-420 acts as the Nucleophile in catalysis.

This sequence belongs to the glycosyl hydrolase 1 family.

The catalysed reaction is raucaffricine + H2O = vomilenine + D-glucose. It carries out the reaction vomilenine + UDP-alpha-D-glucose = raucaffricine + UDP + H(+). Glucosidase specifically involved in alkaloid biosynthesis leading to the accumulation of several alkaloids, including ajmaline, an important plant-derived pharmaceutical used in the treatment of heart disorders. In Rauvolfia serpentina (Serpentine wood), this protein is Raucaffricine-O-beta-D-glucosidase.